Here is a 529-residue protein sequence, read N- to C-terminus: uncharacterized protein (529 aa).

The 117-residue stretch at 13–129 (QTAMRKMRAL…LSTLCQEAQR (117 aa)) folds into the Arf-GAP domain. Residues 28-51 (CFDCGARNPTWCTVTYGVFLCIDC) form a C4-type zinc finger. Basic and acidic residues predominate over residues 291–301 (QMEAKVAKDPT). 4 disordered regions span residues 291–313 (QMEA…GMGG), 335–357 (VLTF…DDKY), 398–424 (KSRY…GASP), and 468–493 (FGSE…SDLK). A compositionally biased stretch (low complexity) spans 399–420 (SRYTASSSSSSTSRAPTTRLTA). Polar residues predominate over residues 476 to 487 (NGSQQRQSSQVP).

GTPase-activating protein for the ADP ribosylation factor family. This is an uncharacterized protein from Caenorhabditis elegans.